A 2752-amino-acid chain; its full sequence is Protein PFF0380w (2752 aa).

Residues 20–30 (EREKEEEEKKR) are compositionally biased toward basic and acidic residues. Disordered stretches follow at residues 20–44 (EREK…NNYN), 139–160 (HIHK…NNDY), 634–678 (NDIV…INMK), 1048–1130 (DKKS…SGEN), and 1153–1172 (ENLQ…NNNG). The span at 32–44 (YNISNNNNNNNYN) shows a compositional bias: low complexity. Positions 142–157 (KNNDINNIHEKNDKSN) are enriched in basic and acidic residues. Low complexity predominate over residues 640-674 (NNNNNNNNNNNNNNNNNNNNNNNNNNNNNNNNNNN). Basic and acidic residues predominate over residues 1048 to 1060 (DKKSEDMKEDTPT). Positions 1061-1075 (RGENLQRGQNLQRGD) are enriched in polar residues. Residues 1076–1090 (NLQRGDNLQRGDNLQ) show a composition bias toward basic and acidic residues. Over residues 1091 to 1130 (RGDNLQNGDNLQNGDNLQRGDNLQNGENLQSGENLQSGEN) the composition is skewed to polar residues. Positions 1162-1172 (NNILYPYNNNG) are enriched in low complexity. The HTH OST-type domain occupies 1277–1354 (TLEEVLEIIS…LHRTHIQHKK (78 aa)). 4 disordered regions span residues 1457–1499 (DIKQ…NNIS), 1958–1999 (AKNS…YYML), 2063–2099 (KRKN…NNDK), and 2501–2537 (DENN…FLHN). 2 stretches are compositionally biased toward low complexity: residues 1469-1499 (NNIN…NNIS) and 1962-1975 (NQEN…NYNN). Residues 1976 to 1994 (NDDDDDNNNNNNDDDDDDN) show a composition bias toward acidic residues. 2 stretches are compositionally biased toward low complexity: residues 2068–2095 (NIHN…NNDN) and 2501–2526 (DENN…VLHN).

This is Protein PFF0380w from Plasmodium falciparum (isolate 3D7).